Here is a 434-residue protein sequence, read N- to C-terminus: Serine--tRNA ligase (434 aa).

239-241 (TAE) serves as a coordination point for L-serine. 270–272 (RSE) lines the ATP pocket. Glutamate 293 lines the L-serine pocket. 357–360 (EISS) serves as a coordination point for ATP. Serine 392 contacts L-serine.

It belongs to the class-II aminoacyl-tRNA synthetase family. Type-1 seryl-tRNA synthetase subfamily. Homodimer. The tRNA molecule binds across the dimer.

It is found in the cytoplasm. It carries out the reaction tRNA(Ser) + L-serine + ATP = L-seryl-tRNA(Ser) + AMP + diphosphate + H(+). The enzyme catalyses tRNA(Sec) + L-serine + ATP = L-seryl-tRNA(Sec) + AMP + diphosphate + H(+). The protein operates within aminoacyl-tRNA biosynthesis; selenocysteinyl-tRNA(Sec) biosynthesis; L-seryl-tRNA(Sec) from L-serine and tRNA(Sec): step 1/1. In terms of biological role, catalyzes the attachment of serine to tRNA(Ser). Is also able to aminoacylate tRNA(Sec) with serine, to form the misacylated tRNA L-seryl-tRNA(Sec), which will be further converted into selenocysteinyl-tRNA(Sec). In Cupriavidus taiwanensis (strain DSM 17343 / BCRC 17206 / CCUG 44338 / CIP 107171 / LMG 19424 / R1) (Ralstonia taiwanensis (strain LMG 19424)), this protein is Serine--tRNA ligase.